The primary structure comprises 415 residues: D-galactonate dehydratase family member RspA (415 aa).

Residues Asn48 and His133 each contribute to the substrate site. The active-site Proton donor/acceptor is Tyr170. Asp223 provides a ligand contact to Mg(2+). His225 (proton donor/acceptor) is an active-site residue. Mg(2+)-binding residues include Glu249 and Glu275. Substrate-binding residues include Glu275, Arg296, His325, Asp329, and Glu352.

This sequence belongs to the mandelate racemase/muconate lactonizing enzyme family. GalD subfamily. Mg(2+) serves as cofactor.

The catalysed reaction is D-mannonate = 2-dehydro-3-deoxy-D-gluconate + H2O. Functionally, has low D-mannonate dehydratase activity (in vitro), suggesting that this is not a physiological substrate and that it has no significant role in D-mannonate degradation in vivo. Has no detectable activity with a panel of 70 other acid sugars (in vitro). In Escherichia coli (strain MS 21-1), this protein is D-galactonate dehydratase family member RspA (rspA).